Consider the following 586-residue polypeptide: MTLDFRNVNMLWSSIIAETLSRLGLTTAIICPGSRSGPLAVAFAQHPDIEAIPVLDERSAAFFGLGIARRKGLPVVLVCTSGTAGANFYPAVIEAEASGVPLLLLTADRPPELRHCQAGQAIDQVKLYGHYPRWQVELALPSTHPEMLAYLRQTCVYAWEQSQRPVPGPVHLNIPFRDPLAPISDLETESLAATFDIDQFFAAVHPLPSVQISLDLQTTNVYLDQWMSCDRGLIIAGPAQPDTPEHYCLAIAQLAHILGWPVLAEGLSPLRNWADRNSYLISTYDLILRNPTIASQLQPQQVISIGALPTSKVLRVWLTQSRAQTWVVDVSDHNMDPLHGLSIPVRISVEGLITSIPAAKKEHCQPLTAYAKSWLNANHSVRTLINRAMQKQSELIESKIAWLLSQILPPRTPLFIANSMPVRDIEYFWQPGTLHIQPYFNRGANGIDGTLSTALGMSHRQQSSVLLTGDLALLHDTNGFLLQDYWQGHLTIIVVNNGGGGIFQMLPISAFDPPFERFFRTPQQVQLKHLAATYQAKWTLIQSWAHLQQALNPLPESGLHILEISCDCQNDTQWRRIFFKECVKSL.

The protein belongs to the TPP enzyme family. MenD subfamily. As to quaternary structure, homodimer. Mg(2+) is required as a cofactor. It depends on Mn(2+) as a cofactor. The cofactor is thiamine diphosphate.

It carries out the reaction isochorismate + 2-oxoglutarate + H(+) = 5-enolpyruvoyl-6-hydroxy-2-succinyl-cyclohex-3-ene-1-carboxylate + CO2. It participates in quinol/quinone metabolism; 1,4-dihydroxy-2-naphthoate biosynthesis; 1,4-dihydroxy-2-naphthoate from chorismate: step 2/7. The protein operates within cofactor biosynthesis; phylloquinone biosynthesis. Its function is as follows. Catalyzes the thiamine diphosphate-dependent decarboxylation of 2-oxoglutarate and the subsequent addition of the resulting succinic semialdehyde-thiamine pyrophosphate anion to isochorismate to yield 2-succinyl-5-enolpyruvyl-6-hydroxy-3-cyclohexene-1-carboxylate (SEPHCHC). In Acaryochloris marina (strain MBIC 11017), this protein is 2-succinyl-5-enolpyruvyl-6-hydroxy-3-cyclohexene-1-carboxylate synthase.